The sequence spans 277 residues: NH(3)-dependent NAD(+) synthetase (277 aa).

36 to 43 (GLSGGIDS) contributes to the ATP binding site. Asp-42 is a binding site for Mg(2+). Deamido-NAD(+) is bound at residue Arg-118. Residue Thr-138 participates in ATP binding. Glu-143 is a Mg(2+) binding site. Residues Lys-167 and Ser-189 each coordinate ATP.

This sequence belongs to the NAD synthetase family. In terms of assembly, homodimer.

The catalysed reaction is deamido-NAD(+) + NH4(+) + ATP = AMP + diphosphate + NAD(+) + H(+). The protein operates within cofactor biosynthesis; NAD(+) biosynthesis; NAD(+) from deamido-NAD(+) (ammonia route): step 1/1. Functionally, catalyzes the ATP-dependent amidation of deamido-NAD to form NAD. Uses ammonia as a nitrogen source. In Chlorobium phaeobacteroides (strain BS1), this protein is NH(3)-dependent NAD(+) synthetase.